The primary structure comprises 596 residues: MATSSIRSRALGLSRRARFETTRLPFIGRRYKSDETLNRISSKITQPKSQGASQAMLYATGLTEEDMSKAQVGISSVWFEGNPCNMHLNDLSGIVRDSVLRAGLVPMRFNSVGVSDGISMGTAGMRYSLQSRELIADGIETVMNAQWYDANISLPGCDKNMPGVLMAMGRTNRPSIMVYGGSIKPGCSAKGQKLDLVSAFQSYGQFITGQIDETERFDIIRNACPGKGACGGMYTANTLATAIETMGMTVPGSSSCPADDPKKLVECENIGEVVKNMLREEIKPRDVMTRQAFENAMIVVNVLGGSTNAVLHLIAIADSVGIKLTIDDFQAVSDKTPFLADLKPSGKYLMNDLYSIGGTPALLKYLLKEGLIDGSGITVTGKTMKENVASWPDFPADQDIIQPLSNPIKPSGHLQILRGSLAPGGSVGKITGKEGLRFEGTAKCYDYEDAFIESLERGEIKKGEKTVVIIRYEGPKGGPGMPEMLKPSAAIMGAGLGQDVALLTDGRFSGGSHGFLIGHIVPEAMEGGPIALARDGDRIVIDAEEKVVDLDVPTEELDARRKQWKAPPLRYQKGTLKKYCALVSDASHGCVTDGPI.

The N-terminal 18 residues, 1–18, are a transit peptide targeting the mitochondrion; that stretch reads MATSSIRSRALGLSRRAR. C84 contributes to the [2Fe-2S] cluster binding site. Position 116 (D116) interacts with Mg(2+). C157 provides a ligand contact to [2Fe-2S] cluster. D158 lines the Mg(2+) pocket. C230 contributes to the [2Fe-2S] cluster binding site. E483 provides a ligand contact to Mg(2+). S509 acts as the Proton acceptor in catalysis.

This sequence belongs to the IlvD/Edd family. [2Fe-2S] cluster is required as a cofactor. Mg(2+) serves as cofactor.

It is found in the mitochondrion. It carries out the reaction (2R)-2,3-dihydroxy-3-methylbutanoate = 3-methyl-2-oxobutanoate + H2O. It catalyses the reaction (2R,3R)-2,3-dihydroxy-3-methylpentanoate = (S)-3-methyl-2-oxopentanoate + H2O. The protein operates within amino-acid biosynthesis; L-isoleucine biosynthesis; L-isoleucine from 2-oxobutanoate: step 3/4. It functions in the pathway amino-acid biosynthesis; L-valine biosynthesis; L-valine from pyruvate: step 3/4. Its activity is regulated as follows. DHAD activity is not inhibited by the dihydroxyacid dehydratase inhibitor aspterric acid (AA). Its function is as follows. Dihydroxyacid dehydratase; part of the gene cluster that mediates the biosynthesis of the sesquiterpenoid aspterric acid (AA), an inhibitor of dihydroxy-acid dehydratase (DHAD) effective as an herbicide. Performs the third step in the common pathway leading to biosynthesis of branched-chain amino acids. Catalyzes the dehydration of (2R,3R)-2,3-dihydroxy-3-methylpentanoate (2,3-dihydroxy-3-methylvalerate) into 2-oxo-3-methylpentanoate (2-oxo-3-methylvalerate) and of (2R)-2,3-dihydroxy-3-methylbutanoate (2,3-dihydroxyisovalerate) into 2-oxo-3-methylbutanoate (2-oxoisovalerate), the penultimate precursor to L-isoleucine and L-valine, respectively. PbrD confers self-resistance in the presence of the dihydroxyacid dehydratase inhibitor aspterric acid (AA) produced by the ast cluster. The protein is Dihydroxy-acid dehydratase pbrD, mitochondrial of Penicillium brasilianum.